Here is a 362-residue protein sequence, read N- to C-terminus: 45 kDa calcium-binding protein (362 aa).

The signal sequence occupies residues 1-36 (MVWPWVAMASRWGPLIGLAPCCLWLLGAVLLMDASA). A glycan (N-linked (GlcNAc...) asparagine) is linked at Asn-40. EF-hand domains follow at residues 98 to 133 (RSRR…KTAE) and 137 to 172 (EAME…SKGH). Ser-99 is modified (phosphoserine). Ca(2+) is bound by residues Asp-111, Asn-113, Asp-115, Lys-117, Glu-122, Asp-150, Asp-152, Asp-154, His-156, and Glu-161. Thr-193 is modified (phosphothreonine). 4 EF-hand domains span residues 197-232 (LENL…HSRG), 233-268 (MLRF…TVEN), 278-313 (WVKD…MNEY), and 314-349 (NALN…FTGS). Asp-213 provides a ligand contact to Ca(2+). Thr-217 is subject to Phosphothreonine. 6 residues coordinate Ca(2+): Glu-220, Asp-246, Asp-248, Asp-250, Gln-252, and Glu-257. Thr-265 bears the Phosphothreonine mark. Ca(2+) contacts are provided by Asp-291, Asn-293, and Asp-295. Position 299 is a phosphothreonine (Thr-299). Residues Glu-302, Asp-327, Asn-329, Asn-331, His-333, and Glu-338 each contribute to the Ca(2+) site. The necessary for intracellular retention in Golgi apparatus lumen stretch occupies residues 309-362 (PMNEYNALNEAKQMIAVADENQNHHLEPEEVLKYSEFFTGSKLVDYARSVHEEF).

Belongs to the CREC family. In terms of assembly, isoform 5 interacts with STXBP1; the interaction is enhanced in presence of calcium. Isoform 5 interacts with STX3. In terms of tissue distribution, ubiquitous. Isoform 5 is expressed in pancreas.

It is found in the golgi apparatus lumen. The protein localises to the cytoplasm. Its subcellular location is the cell membrane. It localises to the cell projection. The protein resides in the bleb. In terms of biological role, may regulate calcium-dependent activities in the endoplasmic reticulum lumen or post-ER compartment. Functionally, isoform 5 may be involved in the exocytosis of zymogens by pancreatic acini. This chain is 45 kDa calcium-binding protein (SDF4), found in Homo sapiens (Human).